Here is a 397-residue protein sequence, read N- to C-terminus: L-cysteine desulfidase (397 aa).

The Proton acceptor role is filled by Cys23. The [4Fe-4S] cluster site is built by Cys288, Cys330, and Cys337.

It belongs to the L-cysteine desulfidase family. Homotrimer. Requires [4Fe-4S] cluster as cofactor.

It catalyses the reaction L-cysteine + H2O = hydrogen sulfide + pyruvate + NH4(+) + H(+). Its function is as follows. Catalyzes the cleavage of L-cysteine to form 2-aminoprop-2-enoate and sulfide. The former then spontaneously hydrolyzes to pyruvate and NH(3). May be responsible for the production of sulfide required for the biosynthesis of iron-sulfur centers in this archaea. The chain is L-cysteine desulfidase from Methanococcus maripaludis (strain C5 / ATCC BAA-1333).